Reading from the N-terminus, the 330-residue chain is Methionyl-tRNA formyltransferase (330 aa).

112-115 (SLLP) provides a ligand contact to (6S)-5,6,7,8-tetrahydrofolate.

Belongs to the Fmt family.

The catalysed reaction is L-methionyl-tRNA(fMet) + (6R)-10-formyltetrahydrofolate = N-formyl-L-methionyl-tRNA(fMet) + (6S)-5,6,7,8-tetrahydrofolate + H(+). Attaches a formyl group to the free amino group of methionyl-tRNA(fMet). The formyl group appears to play a dual role in the initiator identity of N-formylmethionyl-tRNA by promoting its recognition by IF2 and preventing the misappropriation of this tRNA by the elongation apparatus. The sequence is that of Methionyl-tRNA formyltransferase from Alcanivorax borkumensis (strain ATCC 700651 / DSM 11573 / NCIMB 13689 / SK2).